Consider the following 161-residue polypeptide: ATP synthase subunit b 1 (161 aa).

The chain crosses the membrane as a helical span at residues A5–A25.

It belongs to the ATPase B chain family. As to quaternary structure, F-type ATPases have 2 components, F(1) - the catalytic core - and F(0) - the membrane proton channel. F(1) has five subunits: alpha(3), beta(3), gamma(1), delta(1), epsilon(1). F(0) has three main subunits: a(1), b(2) and c(10-14). The alpha and beta chains form an alternating ring which encloses part of the gamma chain. F(1) is attached to F(0) by a central stalk formed by the gamma and epsilon chains, while a peripheral stalk is formed by the delta and b chains.

It is found in the cell inner membrane. Functionally, f(1)F(0) ATP synthase produces ATP from ADP in the presence of a proton or sodium gradient. F-type ATPases consist of two structural domains, F(1) containing the extramembraneous catalytic core and F(0) containing the membrane proton channel, linked together by a central stalk and a peripheral stalk. During catalysis, ATP synthesis in the catalytic domain of F(1) is coupled via a rotary mechanism of the central stalk subunits to proton translocation. Its function is as follows. Component of the F(0) channel, it forms part of the peripheral stalk, linking F(1) to F(0). The sequence is that of ATP synthase subunit b 1 from Afipia carboxidovorans (strain ATCC 49405 / DSM 1227 / KCTC 32145 / OM5) (Oligotropha carboxidovorans).